The chain runs to 237 residues: Ribonuclease PH (237 aa).

Phosphate is bound by residues Arg86 and 124-126 (GTR).

It belongs to the RNase PH family. Homohexameric ring arranged as a trimer of dimers.

It carries out the reaction tRNA(n+1) + phosphate = tRNA(n) + a ribonucleoside 5'-diphosphate. Its function is as follows. Phosphorolytic 3'-5' exoribonuclease that plays an important role in tRNA 3'-end maturation. Removes nucleotide residues following the 3'-CCA terminus of tRNAs; can also add nucleotides to the ends of RNA molecules by using nucleoside diphosphates as substrates, but this may not be physiologically important. Probably plays a role in initiation of 16S rRNA degradation (leading to ribosome degradation) during starvation. The sequence is that of Ribonuclease PH from Rhodopseudomonas palustris (strain ATCC BAA-98 / CGA009).